Consider the following 151-residue polypeptide: Ribosome maturation factor RimP (151 aa).

This sequence belongs to the RimP family.

It localises to the cytoplasm. Functionally, required for maturation of 30S ribosomal subunits. The sequence is that of Ribosome maturation factor RimP from Photobacterium profundum (strain SS9).